The primary structure comprises 212 residues: Large ribosomal subunit protein bL25 (212 aa).

Residues 179-212 form a disordered region; the sequence is EPEEEELPEDDEAAAEGEDAAAGEEAEAPAESED.

The protein belongs to the bacterial ribosomal protein bL25 family. CTC subfamily. In terms of assembly, part of the 50S ribosomal subunit; part of the 5S rRNA/L5/L18/L25 subcomplex. Contacts the 5S rRNA. Binds to the 5S rRNA independently of L5 and L18.

This is one of the proteins that binds to the 5S RNA in the ribosome where it forms part of the central protuberance. The protein is Large ribosomal subunit protein bL25 of Corynebacterium urealyticum (strain ATCC 43042 / DSM 7109).